We begin with the raw amino-acid sequence, 577 residues long: Gamma-tubulin complex component gfh1 (577 aa).

This sequence belongs to the TUBGCP family.

It localises to the cytoplasm. The protein resides in the cytoskeleton. It is found in the microtubule organizing center. The protein localises to the spindle pole body. Functionally, required for proper anchoring of astral microtubules at the spindle pole bodies (SPBs), during anaphase, ensuring correct cell polarity. This is Gamma-tubulin complex component gfh1 (gfh1) from Schizosaccharomyces pombe (strain 972 / ATCC 24843) (Fission yeast).